The sequence spans 200 residues: Peptidyl-tRNA hydrolase (200 aa).

Residue Tyr15 participates in tRNA binding. The active-site Proton acceptor is the His20. TRNA-binding residues include Tyr66, Asn68, and Asn114.

Belongs to the PTH family. As to quaternary structure, monomer.

Its subcellular location is the cytoplasm. The catalysed reaction is an N-acyl-L-alpha-aminoacyl-tRNA + H2O = an N-acyl-L-amino acid + a tRNA + H(+). Hydrolyzes ribosome-free peptidyl-tRNAs (with 1 or more amino acids incorporated), which drop off the ribosome during protein synthesis, or as a result of ribosome stalling. In terms of biological role, catalyzes the release of premature peptidyl moieties from peptidyl-tRNA molecules trapped in stalled 50S ribosomal subunits, and thus maintains levels of free tRNAs and 50S ribosomes. In Paraburkholderia phymatum (strain DSM 17167 / CIP 108236 / LMG 21445 / STM815) (Burkholderia phymatum), this protein is Peptidyl-tRNA hydrolase.